A 353-amino-acid chain; its full sequence is MKILGIETSCDETSAAVLSNGSVCSNIVSSQLCHTSFGGVVPELASREHERLIVSIVDSALSEANITKNDLDVIAATAGPGLIGAVMVGLCFGQAMAYALAIPFVPVNHIEAHIFSAFIQETPHHQAPEGDFISLTVSGGHTLLSHVHKDFTYEVIGRTLDDAAGEAFDKTGKMLGLPYPAGPVIDRLAKNGDPFFHEFPRALTAHSQTSKNYRGNSDFSFSGLKTSVLTFLKKQSPEFIEKHLPDIAASVQKAIVSVLVEKTVSAALAGNVKAISIAGGVSANSALRTSMKKACEQHGIAFHVPNAEYSTDNAAMIATLAGLLLAHDLVPRNRYNIAPFASFAAGRRKASLT.

Residues H109 and H113 each coordinate Fe cation. Residues 136–140 (TVSGG), D169, G182, D186, and N284 contribute to the substrate site. Residue D312 coordinates Fe cation.

Belongs to the KAE1 / TsaD family. Fe(2+) serves as cofactor.

The protein resides in the cytoplasm. It carries out the reaction L-threonylcarbamoyladenylate + adenosine(37) in tRNA = N(6)-L-threonylcarbamoyladenosine(37) in tRNA + AMP + H(+). In terms of biological role, required for the formation of a threonylcarbamoyl group on adenosine at position 37 (t(6)A37) in tRNAs that read codons beginning with adenine. Is involved in the transfer of the threonylcarbamoyl moiety of threonylcarbamoyl-AMP (TC-AMP) to the N6 group of A37, together with TsaE and TsaB. TsaD likely plays a direct catalytic role in this reaction. In Chlorobium phaeobacteroides (strain DSM 266 / SMG 266 / 2430), this protein is tRNA N6-adenosine threonylcarbamoyltransferase.